A 152-amino-acid polypeptide reads, in one-letter code: Interleukin-1 family member 10 (152 aa).

It belongs to the IL-1 family. Interacts with cargo receptor TMED10; the interaction mediates the translocation from the cytoplasm into the ERGIC (endoplasmic reticulum-Golgi intermediate compartment) and thereby secretion. Expressed in fetal skin, spleen and tonsil. Expressed mostly in the basal epithelia of skin and in proliferating B-cells of the tonsil.

It localises to the cytoplasm. The protein localises to the secreted. Its function is as follows. Cytokine with immunomodulatory activity. Alone, does not induce cytokine production, but reduces IL22 and IL17A production by T-cells in response to heat-killed Candida albicans. Reduces IL36G-induced production of IL8 by peripheral blood mononuclear cells. Increases IL6 production by dendritic cells stimulated by bacterial lipopolysaccharides (LPS). Ligand for IL-36R/IL1RL2. The chain is Interleukin-1 family member 10 from Homo sapiens (Human).